An 89-amino-acid chain; its full sequence is Small ribosomal subunit protein uS15 (89 aa).

It belongs to the universal ribosomal protein uS15 family. In terms of assembly, part of the 30S ribosomal subunit. Forms a bridge to the 50S subunit in the 70S ribosome, contacting the 23S rRNA.

One of the primary rRNA binding proteins, it binds directly to 16S rRNA where it helps nucleate assembly of the platform of the 30S subunit by binding and bridging several RNA helices of the 16S rRNA. Functionally, forms an intersubunit bridge (bridge B4) with the 23S rRNA of the 50S subunit in the ribosome. This chain is Small ribosomal subunit protein uS15, found in Chlamydia felis (strain Fe/C-56) (Chlamydophila felis).